The following is a 497-amino-acid chain: Glycerol kinase (497 aa).

Thr12 is a binding site for ADP. Residues Thr12, Thr13, and Ser14 each coordinate ATP. Thr12 lines the sn-glycerol 3-phosphate pocket. Arg16 is a binding site for ADP. The sn-glycerol 3-phosphate site is built by Arg82, Glu83, Tyr134, and Asp243. Glycerol-binding residues include Arg82, Glu83, Tyr134, Asp243, and Gln244. Residues Thr265 and Gly308 each coordinate ADP. ATP-binding residues include Thr265, Gly308, Gln312, and Gly409. 2 residues coordinate ADP: Gly409 and Asn413.

This sequence belongs to the FGGY kinase family. Homotetramer and homodimer (in equilibrium).

It catalyses the reaction glycerol + ATP = sn-glycerol 3-phosphate + ADP + H(+). Its pathway is polyol metabolism; glycerol degradation via glycerol kinase pathway; sn-glycerol 3-phosphate from glycerol: step 1/1. With respect to regulation, activated by phosphorylation and inhibited by fructose 1,6-bisphosphate (FBP). Its function is as follows. Key enzyme in the regulation of glycerol uptake and metabolism. Catalyzes the phosphorylation of glycerol to yield sn-glycerol 3-phosphate. The polypeptide is Glycerol kinase (Caldanaerobacter subterraneus subsp. tengcongensis (strain DSM 15242 / JCM 11007 / NBRC 100824 / MB4) (Thermoanaerobacter tengcongensis)).